Reading from the N-terminus, the 558-residue chain is Serine palmitoyltransferase 2 (558 aa).

The segment covering 33–42 (HDDDEEEEEV) has biased composition (acidic residues). Residues 33–57 (HDDDEEEEEVKVDQGSEETTSSHDI) are disordered. Residue lysine 384 is modified to N6-(pyridoxal phosphate)lysine.

Belongs to the class-II pyridoxal-phosphate-dependent aminotransferase family. Heterodimer of sptl-1/sptl-2. Pyridoxal 5'-phosphate serves as cofactor.

It carries out the reaction L-serine + hexadecanoyl-CoA + H(+) = 3-oxosphinganine + CO2 + CoA. The protein operates within lipid metabolism; sphingolipid metabolism. Functionally, component of the serine palmitoyltransferase (SPT) that catalyzes the first committed step in sphingolipid biosynthesis, which is the condensation of an acyl-CoA species and L-serine. The catalytic core is composed of a heterodimer of sptl-1 and sptl-2 or sptl-1 and sptl-3. Required for the specification of abicobasal polarity and development of the gut lumen. The protein is Serine palmitoyltransferase 2 (sptl-2) of Caenorhabditis elegans.